Here is a 142-residue protein sequence, read N- to C-terminus: MVLSPADKTNVKTAWGKVGAHAGDYGAEALERMFLSFPTTKTYFPHFDLSHGSAQVKGHGKKVADALTNAVAHVDDMPNAQTALSDLHAHKLRVDPVNFKLLSHCLLVTLAAHHPAEFTPAVHASLDKFLASVSTVLTSKYR.

The Globin domain maps to 2-142 (VLSPADKTNV…VSTVLTSKYR (141 aa)). His-59 contributes to the O2 binding site. His-88 serves as a coordination point for heme b.

The protein belongs to the globin family. In terms of assembly, heterotetramer of two alpha chains and two beta chains. As to expression, red blood cells.

Functionally, involved in oxygen transport from the lung to the various peripheral tissues. In terms of biological role, hemopressin acts as an antagonist peptide of the cannabinoid receptor CNR1. Hemopressin-binding efficiently blocks cannabinoid receptor CNR1 and subsequent signaling. This chain is Hemoglobin subunit alpha-2 (HBA2), found in Hylobates lar (Lar gibbon).